A 428-amino-acid chain; its full sequence is Peptidase B (428 aa).

Mn(2+)-binding residues include Lys-195 and Asp-200. Lys-207 is an active-site residue. Residues Asp-218, Asp-277, and Glu-279 each contribute to the Mn(2+) site. Arg-281 is an active-site residue.

This sequence belongs to the peptidase M17 family. Homohexamer. Mn(2+) is required as a cofactor.

The protein localises to the cytoplasm. It carries out the reaction Release of an N-terminal amino acid, Xaa, from a peptide or arylamide. Xaa is preferably Glu or Asp but may be other amino acids, including Leu, Met, His, Cys and Gln.. Functionally, probably plays an important role in intracellular peptide degradation. The chain is Peptidase B from Enterobacter sp. (strain 638).